The primary structure comprises 176 residues: Tubulin polymerization-promoting protein family member 3 (176 aa).

Ala-2 is subject to N-acetylalanine.

This sequence belongs to the TPPP family.

The protein resides in the cytoplasm. It is found in the cytoskeleton. Functionally, regulator of microtubule dynamic that has microtubule bundling activity. Required for embryo implantation; possibly by regulating beta-catenin. Also required for decidualization via regulation of beta-catenin. This Rattus norvegicus (Rat) protein is Tubulin polymerization-promoting protein family member 3 (Tppp3).